Consider the following 448-residue polypeptide: Tryptophan dimethylallyltransferase 1 (448 aa).

L-tryptophan is bound by residues 80–81 and glutamate 89; that span reads IL. Positions 100, 186, and 188 each coordinate substrate. Residues tyrosine 190 and arginine 251 each contribute to the L-tryptophan site. 7 residues coordinate substrate: arginine 264, lysine 266, tyrosine 268, glutamine 350, tyrosine 352, tyrosine 416, and tyrosine 420.

Belongs to the tryptophan dimethylallyltransferase family. In terms of assembly, homodimer.

It carries out the reaction L-tryptophan + dimethylallyl diphosphate = 4-(3-methylbut-2-enyl)-L-tryptophan + diphosphate. The protein operates within alkaloid biosynthesis; ergot alkaloid biosynthesis. Catalyzes the first step of ergot alkaloid biosynthesis. Ergot alkaloids, which are produced by endophyte fungi, can enhance plant host fitness, but also cause livestock toxicosis to host plants. The sequence is that of Tryptophan dimethylallyltransferase 1 (dmaW1) from Epichloe coenophiala (Tall fescue endophyte fungus).